A 923-amino-acid polypeptide reads, in one-letter code: Mitochondrial 10-formyltetrahydrofolate dehydrogenase (923 aa).

The transit peptide at 1–19 (MLRRGSQALRRFSTGRVYF) directs the protein to the mitochondrion; not cleaved. The segment at 23–331 (LKLALIGQSL…PASQYFSTGE (309 aa)) is hydrolase domain. Serine 31 carries the phosphoserine modification. Lysine 60 carries the N6-succinyllysine modification. (6R)-10-formyltetrahydrofolate is bound at residue 110 to 112 (QFI). Histidine 128 serves as the catalytic Proton donor. (6R)-10-formyltetrahydrofolate is bound at residue aspartate 164. In terms of domain architecture, Carrier spans 339–416 (AEEVKVAETI…GFIQKVVRKL (78 aa)). Residue serine 375 is modified to O-(pantetheine 4'-phosphoryl)serine. The segment at 438-923 (MVKMPYQCFI…LKTKTVTLEY (486 aa)) is aldehyde dehydrogenase domain. Residues 592 to 594 (IPW) and 618 to 621 (KPAQ) each bind NADP(+). At serine 650 the chain carries Phosphoserine. NADP(+) contacts are provided by residues 651 to 656 (GGIAGQ) and 671 to 672 (GS). Lysine 681 carries the post-translational modification N6-succinyllysine. Glutamate 694 functions as the Proton acceptor in the catalytic mechanism. 694 to 695 (EL) serves as a coordination point for NADP(+). Cysteine 728 serves as the catalytic Proton donor. An NADP(+)-binding site is contributed by lysine 778. Residue lysine 788 is modified to N6-succinyllysine. 825–827 (ESF) serves as a coordination point for NADP(+). Position 903 is an N6-acetyllysine (lysine 903).

The protein in the N-terminal section; belongs to the GART family. This sequence in the C-terminal section; belongs to the aldehyde dehydrogenase family. ALDH1L subfamily. In terms of processing, phosphopantetheinylation at Ser-375 by AASDHPPT is required for the formyltetrahydrofolate dehydrogenase activity. As to expression, highly expressed in pancreas, heart, brain and skeletal muscle.

Its subcellular location is the mitochondrion. The enzyme catalyses (6R)-10-formyltetrahydrofolate + NADP(+) + H2O = (6S)-5,6,7,8-tetrahydrofolate + CO2 + NADPH + H(+). Functionally, mitochondrial 10-formyltetrahydrofolate dehydrogenase that catalyzes the NADP(+)-dependent conversion of 10-formyltetrahydrofolate to tetrahydrofolate and carbon dioxide. The sequence is that of Mitochondrial 10-formyltetrahydrofolate dehydrogenase from Homo sapiens (Human).